The chain runs to 99 residues: ATP-dependent Clp protease adapter protein ClpS (99 aa).

Belongs to the ClpS family. Binds to the N-terminal domain of the chaperone ClpA.

Involved in the modulation of the specificity of the ClpAP-mediated ATP-dependent protein degradation. In Helicobacter hepaticus (strain ATCC 51449 / 3B1), this protein is ATP-dependent Clp protease adapter protein ClpS.